A 72-amino-acid chain; its full sequence is Translation initiation factor IF-1 (72 aa).

Positions 1–72 (MAKDNVIEIE…SKGRITYRFK (72 aa)) constitute an S1-like domain.

Belongs to the IF-1 family. In terms of assembly, component of the 30S ribosomal translation pre-initiation complex which assembles on the 30S ribosome in the order IF-2 and IF-3, IF-1 and N-formylmethionyl-tRNA(fMet); mRNA recruitment can occur at any time during PIC assembly.

It is found in the cytoplasm. Functionally, one of the essential components for the initiation of protein synthesis. Stabilizes the binding of IF-2 and IF-3 on the 30S subunit to which N-formylmethionyl-tRNA(fMet) subsequently binds. Helps modulate mRNA selection, yielding the 30S pre-initiation complex (PIC). Upon addition of the 50S ribosomal subunit IF-1, IF-2 and IF-3 are released leaving the mature 70S translation initiation complex. In Pediococcus pentosaceus (strain ATCC 25745 / CCUG 21536 / LMG 10740 / 183-1w), this protein is Translation initiation factor IF-1.